A 212-amino-acid chain; its full sequence is Glycerol-3-phosphate acyltransferase (212 aa).

5 consecutive transmembrane segments (helical) span residues 9–29 (AACLVPVILTALLLLAIGYLL), 67–87 (GPALVVFLIDVGKGALAVLLA), 95–115 (WLQVLAGLAALAGHIWPVWLG), 128–148 (MFLGLAWPVGLACFGLFMAVI), and 168–190 (LMVVSGGSSAYVVVSLVASLMVL).

Belongs to the PlsY family. Probably interacts with PlsX.

The protein localises to the cell inner membrane. The enzyme catalyses an acyl phosphate + sn-glycerol 3-phosphate = a 1-acyl-sn-glycero-3-phosphate + phosphate. Its pathway is lipid metabolism; phospholipid metabolism. Its function is as follows. Catalyzes the transfer of an acyl group from acyl-phosphate (acyl-PO(4)) to glycerol-3-phosphate (G3P) to form lysophosphatidic acid (LPA). This enzyme utilizes acyl-phosphate as fatty acyl donor, but not acyl-CoA or acyl-ACP. In Parasynechococcus marenigrum (strain WH8102), this protein is Glycerol-3-phosphate acyltransferase.